A 37-amino-acid polypeptide reads, in one-letter code: Cytochrome b6-f complex subunit 5 (37 aa).

Residues 5 to 25 traverse the membrane as a helical segment; that stretch reads LLSGIVLGLIVVTLAGLFYAA.

This sequence belongs to the PetG family. In terms of assembly, the 4 large subunits of the cytochrome b6-f complex are cytochrome b6, subunit IV (17 kDa polypeptide, PetD), cytochrome f and the Rieske protein, while the 4 small subunits are PetG, PetL, PetM and PetN. The complex functions as a dimer.

Its subcellular location is the cellular thylakoid membrane. Component of the cytochrome b6-f complex, which mediates electron transfer between photosystem II (PSII) and photosystem I (PSI), cyclic electron flow around PSI, and state transitions. PetG is required for either the stability or assembly of the cytochrome b6-f complex. This is Cytochrome b6-f complex subunit 5 from Anabaena variabilis.